A 523-amino-acid chain; its full sequence is Synaptotagmin-10 (523 aa).

The Vesicular portion of the chain corresponds to 1–55; that stretch reads MSFHKEDGVNSLCQKALHIVTELCFAGQVEWEKCSGIFPRDRGSQGGSSTDISVS. A cysteine motif region spans residues 13 to 35; sequence CQKALHIVTELCFAGQVEWEKCS. Residues 56–76 form a helical membrane-spanning segment; it reads LLAVVVSFCGLALLVVSLFVF. Topologically, residues 77–523 are cytoplasmic; that stretch reads WKLCWPCWKS…CPSPKPPSTP (447 aa). At T136 the chain carries Phosphothreonine. C2 domains are found at residues 231–352 and 363–496; these read ICGK…TVWK and DLGE…THWH. The Ca(2+) site is built by D262, D268, D320, F321, D322, S325, D328, D394, D400, D454, and D456.

Belongs to the synaptotagmin family. In terms of assembly, homodimer; disulfide-linked via the cysteine motif. Can also form heterodimers with SYT3, SYT6, SYT7 and SYT9. The cofactor is Ca(2+). Expressed only in pancreas, lung and kidney.

The protein resides in the cytoplasmic vesicle. It localises to the secretory vesicle membrane. Functionally, ca(2+) sensor specifically required for the Ca(2+)-dependent exocytosis of secretory vesicles containing IGF1 in neurons of the olfactory bulb. Exocytosis of IGF1 is required for sensory perception of smell. Not involved in Ca(2+)-dependent synaptic vesicle exocytosis. Acts through Ca(2+) and phospholipid binding to the C2 domain: Ca(2+) induces binding of the C2-domains to phospholipid membranes and to assembled SNARE-complexes; both actions contribute to triggering exocytosis. In Homo sapiens (Human), this protein is Synaptotagmin-10 (SYT10).